The following is a 370-amino-acid chain: Histidinol-phosphate aminotransferase (370 aa).

Residue Lys229 is modified to N6-(pyridoxal phosphate)lysine.

This sequence belongs to the class-II pyridoxal-phosphate-dependent aminotransferase family. Histidinol-phosphate aminotransferase subfamily. As to quaternary structure, homodimer. Pyridoxal 5'-phosphate is required as a cofactor.

It catalyses the reaction L-histidinol phosphate + 2-oxoglutarate = 3-(imidazol-4-yl)-2-oxopropyl phosphate + L-glutamate. It participates in amino-acid biosynthesis; L-histidine biosynthesis; L-histidine from 5-phospho-alpha-D-ribose 1-diphosphate: step 7/9. This chain is Histidinol-phosphate aminotransferase, found in Helicobacter hepaticus (strain ATCC 51449 / 3B1).